The primary structure comprises 228 residues: NADH-quinone oxidoreductase subunit C (228 aa).

This sequence belongs to the complex I 30 kDa subunit family. NDH-1 is composed of 14 different subunits. Subunits NuoB, C, D, E, F, and G constitute the peripheral sector of the complex.

It is found in the cell membrane. The catalysed reaction is a quinone + NADH + 5 H(+)(in) = a quinol + NAD(+) + 4 H(+)(out). Its function is as follows. NDH-1 shuttles electrons from NADH, via FMN and iron-sulfur (Fe-S) centers, to quinones in the respiratory chain. The immediate electron acceptor for the enzyme in this species is believed to be a menaquinone. Couples the redox reaction to proton translocation (for every two electrons transferred, four hydrogen ions are translocated across the cytoplasmic membrane), and thus conserves the redox energy in a proton gradient. The polypeptide is NADH-quinone oxidoreductase subunit C (Mycobacteroides abscessus (strain ATCC 19977 / DSM 44196 / CCUG 20993 / CIP 104536 / JCM 13569 / NCTC 13031 / TMC 1543 / L948) (Mycobacterium abscessus)).